A 351-amino-acid chain; its full sequence is N-acetyl-gamma-glutamyl-phosphate reductase (351 aa).

Residue cysteine 154 is part of the active site.

Belongs to the NAGSA dehydrogenase family. Type 1 subfamily.

It is found in the cytoplasm. It carries out the reaction N-acetyl-L-glutamate 5-semialdehyde + phosphate + NADP(+) = N-acetyl-L-glutamyl 5-phosphate + NADPH + H(+). It participates in amino-acid biosynthesis; L-arginine biosynthesis; N(2)-acetyl-L-ornithine from L-glutamate: step 3/4. Its function is as follows. Catalyzes the NADPH-dependent reduction of N-acetyl-5-glutamyl phosphate to yield N-acetyl-L-glutamate 5-semialdehyde. In Prochlorococcus marinus (strain AS9601), this protein is N-acetyl-gamma-glutamyl-phosphate reductase.